A 772-amino-acid polypeptide reads, in one-letter code: General transcription and DNA repair factor IIH helicase subunit XPD (772 aa).

The Helicase ATP-binding domain maps to D7–E283. M42–T49 is a binding site for ATP. 4 residues coordinate [4Fe-4S] cluster: C115, C133, C154, and C189. A DEAH box motif is present at residues D233–H236.

This sequence belongs to the helicase family. RAD3/XPD subfamily. Component of the 7-subunit TFIIH core complex composed of XPB/ptr8, XPD/rad15, ssl1, tfb1, tfb2, tfb4 and tfb5, which is active in NER. The core complex associates with the 3-subunit CTD-kinase module TFIIK composed of mcs2/cyclin H, mcs6/cdk7 and pmh1/tfb3 to form the 10-subunit holoenzyme (holo-TFIIH) active in transcription. It depends on [4Fe-4S] cluster as a cofactor.

It localises to the nucleus. It carries out the reaction Couples ATP hydrolysis with the unwinding of duplex DNA at the replication fork by translocating in the 5'-3' direction. This creates two antiparallel DNA single strands (ssDNA). The leading ssDNA polymer is the template for DNA polymerase III holoenzyme which synthesizes a continuous strand.. The catalysed reaction is ATP + H2O = ADP + phosphate + H(+). ATP-dependent 5'-3' DNA helicase, component of the general transcription and DNA repair factor IIH (TFIIH) core complex, which is involved in general and transcription-coupled nucleotide excision repair (NER) of damaged DNA and, when complexed to TFIIK, in RNA transcription by RNA polymerase II. In NER, TFIIH acts by opening DNA around the lesion to allow the excision of the damaged oligonucleotide and its replacement by a new DNA fragment. The ATP-dependent helicase activity of XPD/rad15 is required for DNA opening. In transcription, TFIIH has an essential role in transcription initiation. When the pre-initiation complex (PIC) has been established, TFIIH is required for promoter opening and promoter escape. Phosphorylation of the C-terminal tail (CTD) of the largest subunit of RNA polymerase II by the kinase module TFIIK controls the initiation of transcription. XPD/rad15 acts by forming a bridge between TFIIK and the core-TFIIH complex. Involved in the maintenance of the fidelity of DNA replication. The chain is General transcription and DNA repair factor IIH helicase subunit XPD from Schizosaccharomyces pombe (strain 972 / ATCC 24843) (Fission yeast).